A 188-amino-acid chain; its full sequence is dCTP deaminase (188 aa).

DCTP-binding positions include 111–116, 135–137, Gln-156, Tyr-170, and Gln-180; these read KSTYAR and TLE. The active-site Proton donor/acceptor is the Glu-137.

This sequence belongs to the dCTP deaminase family. Homotrimer.

It catalyses the reaction dCTP + H2O + H(+) = dUTP + NH4(+). The protein operates within pyrimidine metabolism; dUMP biosynthesis; dUMP from dCTP (dUTP route): step 1/2. Functionally, catalyzes the deamination of dCTP to dUTP. This Neisseria gonorrhoeae (strain ATCC 700825 / FA 1090) protein is dCTP deaminase.